Consider the following 376-residue polypeptide: N-acetyldiaminopimelate deacetylase (376 aa).

D69 is a catalytic residue. E128 (proton acceptor) is an active-site residue.

It belongs to the peptidase M20A family. N-acetyldiaminopimelate deacetylase subfamily.

The catalysed reaction is N-acetyl-(2S,6S)-2,6-diaminopimelate + H2O = (2S,6S)-2,6-diaminopimelate + acetate. Its pathway is amino-acid biosynthesis; L-lysine biosynthesis via DAP pathway; LL-2,6-diaminopimelate from (S)-tetrahydrodipicolinate (acetylase route): step 3/3. Functionally, catalyzes the conversion of N-acetyl-diaminopimelate to diaminopimelate and acetate. The protein is N-acetyldiaminopimelate deacetylase of Bacillus anthracis (strain A0248).